Consider the following 349-residue polypeptide: Sesquiterpene synthase MAC_05714 (349 aa).

Mg(2+) contacts are provided by Asp-91 and Asp-96. The short motif at 91–96 is the DDXXXD motif element; it reads DDLFVD. Residue Arg-184 coordinates substrate. Residues Asn-230, Ser-234, and Glu-238 each coordinate Mg(2+).

This sequence belongs to the terpene synthase family. Mg(2+) serves as cofactor.

It carries out the reaction (2E,6E)-farnesyl diphosphate + H2O = (+)-corvol ether B + diphosphate. It catalyses the reaction (2E,6E)-farnesyl diphosphate + H2O = (+)-corvol ether A + diphosphate. Terpene synthase that catalyzes the conversion of (2E,6E)-farnesyl diphosphate (FPP) into sesquiterpenes which are important for fungi-environment interactions. Produces a mixture consisting of 8 sesquiterpenes including corvol ethers A and B, as well as traces of epizonarene, gamma-cadinene, delta-cadinene, alpha-cadinene, alpha-cadinol, and an unidentified sesquiterpene. Produces both corvol ether A and corvol ether B in similar concentrations. The sequence is that of Sesquiterpene synthase MAC_05714 from Metarhizium acridum (strain CQMa 102).